The primary structure comprises 565 residues: Acyl-CoA ligase easD (565 aa).

Residues 213-221 (TSGTSGKQK), 354-359 (HAYGLT), Asp438, Arg457, and Lys555 each bind ATP. Residues 284 to 354 (DMQLMLKTIE…KLRPTWKINH (71 aa)) form an SBD1 region. The segment at 355–417 (AYGLTETGVV…FNSPSCFLGY (63 aa)) is SBD2.

Belongs to the ATP-dependent AMP-binding enzyme family.

The protein operates within antibiotic biosynthesis. In terms of biological role, acyl-CoA ligase; part of the gene cluster that mediates the biosynthesis of emericellamides, secondary metabolites acting as antibiotics. The biosynthesis of emericellamides initiates from the highly reducing polyketide synthase easB which catalyzes the formation of the linear polyketide chain. EasB produces several polyketides that can be further processed by the downstream enzymes. The polyketides are released from easB as linear polyketide carboxylic acids, which are converted to CoA thioesters by the acyl-CoA ligase easD. The substrates are then loaded onto the acyltransferase easC, which shuttles them to the first thiolation (T) domain of the nonribosomal peptide synthetase easA. EasA then performs condensation of the polyketides with one glycine, two alanine, one valine and one leucine residues. A last step of cyclization leads to the production of emericellamides. The protein is Acyl-CoA ligase easD of Emericella nidulans (strain FGSC A4 / ATCC 38163 / CBS 112.46 / NRRL 194 / M139) (Aspergillus nidulans).